The chain runs to 258 residues: Deoxyribose-phosphate aldolase (258 aa).

The Proton donor/acceptor role is filled by aspartate 102. Catalysis depends on lysine 165, which acts as the Schiff-base intermediate with acetaldehyde. Lysine 199 functions as the Proton donor/acceptor in the catalytic mechanism.

Belongs to the DeoC/FbaB aldolase family. DeoC type 2 subfamily.

Its subcellular location is the cytoplasm. It catalyses the reaction 2-deoxy-D-ribose 5-phosphate = D-glyceraldehyde 3-phosphate + acetaldehyde. It participates in carbohydrate degradation; 2-deoxy-D-ribose 1-phosphate degradation; D-glyceraldehyde 3-phosphate and acetaldehyde from 2-deoxy-alpha-D-ribose 1-phosphate: step 2/2. In terms of biological role, catalyzes a reversible aldol reaction between acetaldehyde and D-glyceraldehyde 3-phosphate to generate 2-deoxy-D-ribose 5-phosphate. The chain is Deoxyribose-phosphate aldolase from Vibrio campbellii (strain ATCC BAA-1116).